Here is an 84-residue protein sequence, read N- to C-terminus: Small ribosomal subunit protein uS17 (84 aa).

It belongs to the universal ribosomal protein uS17 family. In terms of assembly, part of the 30S ribosomal subunit.

Functionally, one of the primary rRNA binding proteins, it binds specifically to the 5'-end of 16S ribosomal RNA. In Alkaliphilus oremlandii (strain OhILAs) (Clostridium oremlandii (strain OhILAs)), this protein is Small ribosomal subunit protein uS17.